A 632-amino-acid polypeptide reads, in one-letter code: Chaperone protein HtpG (632 aa).

The a; substrate-binding stretch occupies residues 1–339 (MTQQTMSFQA…SSDLPLNVSR (339 aa)). Residues 340–559 (EILQESRDVK…DNDMSGYLQR (220 aa)) are b. The tract at residues 560 to 632 (MLKAAGQSAP…TNALLLSRAA (73 aa)) is c.

The protein belongs to the heat shock protein 90 family. As to quaternary structure, homodimer.

It localises to the cytoplasm. Molecular chaperone. Has ATPase activity. In Burkholderia pseudomallei (strain 668), this protein is Chaperone protein HtpG.